The sequence spans 423 residues: Enolase (423 aa).

Position 166 (Q166) interacts with (2R)-2-phosphoglycerate. E208 (proton donor) is an active-site residue. Residues D242, E283, and D310 each contribute to the Mg(2+) site. 4 residues coordinate (2R)-2-phosphoglycerate: K335, R364, S365, and K386. K335 functions as the Proton acceptor in the catalytic mechanism.

It belongs to the enolase family. The cofactor is Mg(2+).

The protein resides in the cytoplasm. It localises to the secreted. It is found in the cell surface. The enzyme catalyses (2R)-2-phosphoglycerate = phosphoenolpyruvate + H2O. It participates in carbohydrate degradation; glycolysis; pyruvate from D-glyceraldehyde 3-phosphate: step 4/5. Catalyzes the reversible conversion of 2-phosphoglycerate (2-PG) into phosphoenolpyruvate (PEP). It is essential for the degradation of carbohydrates via glycolysis. This is Enolase from Elusimicrobium minutum (strain Pei191).